Reading from the N-terminus, the 341-residue chain is UDP-glucose 4-epimerase (341 aa).

Belongs to the polysaccharide synthase family.

It catalyses the reaction UDP-alpha-D-glucose = UDP-alpha-D-galactose. Its function is as follows. Epimerizes UDP-galactose to UDP-glucose. May contribute to formation of LPS or the exopolysaccharide slime layer by providing UDP-galactose as a substrate for either molecule. This Rickettsia prowazekii (strain Madrid E) protein is UDP-glucose 4-epimerase (capD).